The sequence spans 253 residues: H repeat-associated putative transposase YbfD (253 aa).

This sequence belongs to the transposase 11 family.

This is H repeat-associated putative transposase YbfD (ybfD) from Escherichia coli (strain K12).